Consider the following 222-residue polypeptide: Large ribosomal subunit protein uL4 (222 aa).

The protein belongs to the universal ribosomal protein uL4 family. As to quaternary structure, part of the 50S ribosomal subunit.

Its function is as follows. One of the primary rRNA binding proteins, this protein initially binds near the 5'-end of the 23S rRNA. It is important during the early stages of 50S assembly. It makes multiple contacts with different domains of the 23S rRNA in the assembled 50S subunit and ribosome. Functionally, forms part of the polypeptide exit tunnel. This is Large ribosomal subunit protein uL4 from Chlamydia trachomatis serovar L2 (strain ATCC VR-902B / DSM 19102 / 434/Bu).